The following is a 73-amino-acid chain: MEKNREIISKNNINVEVFLIRSLIGKLNKKVKVLKALGLNKIGDKKVHFLNQSIKGMLNETINMILLSEVSNV.

Belongs to the universal ribosomal protein uL30 family. Part of the 50S ribosomal subunit.

This is Large ribosomal subunit protein uL30 from Borreliella afzelii (strain PKo) (Borrelia afzelii).